Here is a 40-residue protein sequence, read N- to C-terminus: Cytolysin EnT (40 aa).

The interval 3 to 12 (ALAGTIIEGA) is plays an important role in the hemolytic activity. An N-terminal region region spans residues 11–30 (GASLTFSVLTTILDALGSVS).

It belongs to the actinoporin family. Sea anemone subfamily. Octamer or nonamer in membranes. Monomer in the soluble state.

The protein resides in the secreted. It is found in the nematocyst. It localises to the target cell membrane. In terms of biological role, pore-forming protein that forms cations-selective hydrophilic pores of around 1 nm and causes cytolysis. Pore formation is a multi-step process that involves specific recognition of membrane sphingomyelin (but neither cholesterol nor phosphatidylcholine) using aromatic rich region and adjacent phosphocholine (POC) binding site, firm binding to the membrane (mainly driven by hydrophobic interactions) accompanied by the transfer of the N-terminal region to the lipid-water interface and finally pore formation after oligomerization of monomers. This toxin shows hemolytic activities. This Entacmaea quadricolor (Bubble-tip anemone) protein is Cytolysin EnT.